Here is a 231-residue protein sequence, read N- to C-terminus: Large ribosomal subunit protein uL1 (231 aa).

It belongs to the universal ribosomal protein uL1 family. Part of the 50S ribosomal subunit.

Binds directly to 23S rRNA. The L1 stalk is quite mobile in the ribosome, and is involved in E site tRNA release. Functionally, protein L1 is also a translational repressor protein, it controls the translation of the L11 operon by binding to its mRNA. This is Large ribosomal subunit protein uL1 from Pseudomonas syringae pv. syringae (strain B728a).